We begin with the raw amino-acid sequence, 448 residues long: Chromosomal replication initiator protein DnaA (448 aa).

The tract at residues 1–73 (MNAQLKQLWT…INAIKLITSK (73 aa)) is domain I, interacts with DnaA modulators. A domain II region spans residues 73–109 (KKYNIEFSITSEEIFNNQQLKPKSSNDNIVVNDEMTS). The interval 110 to 326 (ILNPKYTFDS…GALIRIVAYS (217 aa)) is domain III, AAA+ region. ATP-binding residues include glycine 154, glycine 156, lysine 157, and threonine 158. The interval 327 to 448 (SLTNREISVD…DDLNKKITNN (122 aa)) is domain IV, binds dsDNA.

The protein belongs to the DnaA family. Oligomerizes as a right-handed, spiral filament on DNA at oriC.

The protein resides in the cytoplasm. Functionally, plays an essential role in the initiation and regulation of chromosomal replication. ATP-DnaA binds to the origin of replication (oriC) to initiate formation of the DNA replication initiation complex once per cell cycle. Binds the DnaA box (a 9 base pair repeat at the origin) and separates the double-stranded (ds)DNA. Forms a right-handed helical filament on oriC DNA; dsDNA binds to the exterior of the filament while single-stranded (ss)DNA is stabiized in the filament's interior. The ATP-DnaA-oriC complex binds and stabilizes one strand of the AT-rich DNA unwinding element (DUE), permitting loading of DNA polymerase. After initiation quickly degrades to an ADP-DnaA complex that is not apt for DNA replication. Binds acidic phospholipids. This Clostridium novyi (strain NT) protein is Chromosomal replication initiator protein DnaA.